The following is a 993-amino-acid chain: General transcription factor II-I repeat domain-containing protein 1 (993 aa).

GTF2I-like repeat units lie at residues 117–211 (LGPT…EPKS) and 332–426 (LRET…DGTT). Residues 461 to 480 (GSRSEKSSISDECEPGTSSE) are disordered. GTF2I-like repeat units lie at residues 597–691 (DGIG…LEDC), 727–821 (LSRI…RPDD), and 824–918 (ANRL…ICSE). Positions 916-961 (CSEPPKIKNGNTGPKRKRKRVSEGNSISSASSNCSSSSSSSSNMDP) are disordered. A Nuclear localization signal motif is present at residues 929–936 (PKRKRKRV). Positions 938-961 (EGNSISSASSNCSSSSSSSSNMDP) are enriched in low complexity.

The protein belongs to the TFII-I family. In terms of assembly, interacts (via repeats 4-5) with foxh1/fast1 (via Fork-head domain). Interacts with smad2 and smad3 (via MH1 domain) in a ligand (activin)-dependent manner. Interacts with pou5f1.1/oct-25 to form a repression complex on the promoters of the gsc and mix2 genes. Uniformly expressed in the embryo in pre- and early gastrula stages. Enriched in the head region of early neurula through tailbud stages.

Its subcellular location is the nucleus. Transcription factor that activates a subset of organizer-specific genes. Binds to the distal element (DE) of the gsc promoter to regulate its expression. In the presence of pou5f1.1/oct-25, forms a repression complex on the promoter of the gsc and mix2 genes to inhibit their transcription. This Xenopus laevis (African clawed frog) protein is General transcription factor II-I repeat domain-containing protein 1 (gtf2ird1).